A 373-amino-acid polypeptide reads, in one-letter code: T-protein (373 aa).

Residues 1–90 (MVAELTALRD…ESYTSENDKG (90 aa)) enclose the Chorismate mutase domain. One can recognise a Prephenate/arogenate dehydrogenase domain in the interval 99-361 (RPVVIVGGKG…DHAKRFLVES (263 aa)).

In the C-terminal section; belongs to the prephenate/arogenate dehydrogenase family.

It is found in the cytoplasm. It carries out the reaction chorismate = prephenate. The enzyme catalyses prephenate + NAD(+) = 3-(4-hydroxyphenyl)pyruvate + CO2 + NADH. It participates in amino-acid biosynthesis; L-tyrosine biosynthesis; (4-hydroxyphenyl)pyruvate from prephenate (NAD(+) route): step 1/1. Its pathway is metabolic intermediate biosynthesis; prephenate biosynthesis; prephenate from chorismate: step 1/1. This Enterobacter agglomerans (Erwinia herbicola) protein is T-protein (tyrA).